The chain runs to 61 residues: UPF0391 membrane protein Aave_0978 (61 aa).

A run of 2 helical transmembrane segments spans residues 5–25 and 33–53; these read AIIFAIISLIAGALGFSGVAA and ILFFLFLVVAVIFIVLAVLGV.

Belongs to the UPF0391 family.

It is found in the cell membrane. This chain is UPF0391 membrane protein Aave_0978, found in Paracidovorax citrulli (strain AAC00-1) (Acidovorax citrulli).